Reading from the N-terminus, the 371-residue chain is Flagellar P-ring protein (371 aa).

The first 25 residues, 1-25 (MKMRACKWLLTLAVAFAATLSSAYA), serve as a signal peptide directing secretion.

It belongs to the FlgI family. As to quaternary structure, the basal body constitutes a major portion of the flagellar organelle and consists of four rings (L,P,S, and M) mounted on a central rod.

It is found in the periplasm. Its subcellular location is the bacterial flagellum basal body. Functionally, assembles around the rod to form the L-ring and probably protects the motor/basal body from shearing forces during rotation. In Sinorhizobium medicae (strain WSM419) (Ensifer medicae), this protein is Flagellar P-ring protein.